A 277-amino-acid polypeptide reads, in one-letter code: 4-deoxy-L-threo-5-hexosulose-uronate ketol-isomerase (277 aa).

His195, His197, Glu202, and His244 together coordinate Zn(2+).

Belongs to the KduI family. The cofactor is Zn(2+).

It catalyses the reaction 5-dehydro-4-deoxy-D-glucuronate = 3-deoxy-D-glycero-2,5-hexodiulosonate. Its pathway is glycan metabolism; pectin degradation; 2-dehydro-3-deoxy-D-gluconate from pectin: step 4/5. Functionally, catalyzes the isomerization of 5-dehydro-4-deoxy-D-glucuronate to 3-deoxy-D-glycero-2,5-hexodiulosonate. The chain is 4-deoxy-L-threo-5-hexosulose-uronate ketol-isomerase from Oceanobacillus iheyensis (strain DSM 14371 / CIP 107618 / JCM 11309 / KCTC 3954 / HTE831).